The chain runs to 398 residues: MAKEKYDRSKPHVNIGTIGHVDHGKTTLTAAITTVLARRLPSAVNQPKDYASIDAAPEERERGITINTAHVEYETAKRHYAHIDAPGHADYVKNMITGAAQMDGAILVVASTDGPMPQTREHILLSRQVGVKHLIVFMNKVDLVDDEELLELVEMEIRDLLSEYDFPGDDLPVIQGSALKALEGDSKYEDIIMELMDTVDEYIPEPERDTDKPLLLPVEDVFSITGRGTVASGRIDRGIVKVNDEIEIVGIKEEIQKAVVTGVEMFRKQLDEGLAGDNVGVLLRGIQRDEIERGQVIAKPGSINPHTKFKGEVYILTKEEGGRHTPFFNNYRPQFYFRTTDVTGSIELPAGTEMVMPGDNVTIDVELIHPIAVEQGTTFSIREGGRTVGSGMVTEIEA.

The tr-type G domain occupies 10–207 (KPHVNIGTIG…TVDEYIPEPE (198 aa)). The segment at 19–26 (GHVDHGKT) is G1. Position 19 to 26 (19 to 26 (GHVDHGKT)) interacts with GTP. Residue threonine 26 coordinates Mg(2+). The tract at residues 63–67 (GITIN) is G2. Residues 84 to 87 (DAPG) are G3. GTP-binding positions include 84–88 (DAPGH) and 139–142 (NKVD). Residues 139-142 (NKVD) are G4. The tract at residues 177–179 (SAL) is G5.

Belongs to the TRAFAC class translation factor GTPase superfamily. Classic translation factor GTPase family. EF-Tu/EF-1A subfamily. As to quaternary structure, monomer.

The protein resides in the cytoplasm. The catalysed reaction is GTP + H2O = GDP + phosphate + H(+). Its function is as follows. GTP hydrolase that promotes the GTP-dependent binding of aminoacyl-tRNA to the A-site of ribosomes during protein biosynthesis. This Streptococcus sanguinis (strain SK36) protein is Elongation factor Tu.